Consider the following 437-residue polypeptide: Asparagine--tRNA ligase (437 aa).

It belongs to the class-II aminoacyl-tRNA synthetase family. Homodimer.

It is found in the cytoplasm. It carries out the reaction tRNA(Asn) + L-asparagine + ATP = L-asparaginyl-tRNA(Asn) + AMP + diphosphate + H(+). This Symbiobacterium thermophilum (strain DSM 24528 / JCM 14929 / IAM 14863 / T) protein is Asparagine--tRNA ligase.